The primary structure comprises 396 residues: Queuine tRNA-ribosyltransferase catalytic subunit 1 (396 aa).

The Proton acceptor role is filled by aspartate 99. Queuine contacts are provided by residues 99–103, aspartate 153, glutamine 196, and glycine 223; that span reads DSGGF. The RNA binding stretch occupies residues 254–260; the sequence is GVGYATD. Aspartate 273 serves as the catalytic Nucleophile. Residues 278–282 are RNA binding; important for wobble base 34 recognition; sequence TRTAR. Residues cysteine 311, cysteine 313, cysteine 316, and histidine 341 each contribute to the Zn(2+) site.

This sequence belongs to the queuine tRNA-ribosyltransferase family. Heterodimer of a catalytic subunit qtrt1 and an accessory subunit qtrt2. The cofactor is Zn(2+).

The protein resides in the cytoplasm. Its subcellular location is the mitochondrion outer membrane. The catalysed reaction is guanosine(34) in tRNA + queuine = queuosine(34) in tRNA + guanine. Its function is as follows. Catalytic subunit of the queuine tRNA-ribosyltransferase (TGT) that catalyzes the base-exchange of a guanine (G) residue with queuine (Q) at position 34 (anticodon wobble position) in tRNAs with GU(N) anticodons (tRNA-Asp, -Asn, -His and -Tyr), resulting in the hypermodified nucleoside queuosine (7-(((4,5-cis-dihydroxy-2-cyclopenten-1-yl)amino)methyl)-7-deazaguanosine). Catalysis occurs through a double-displacement mechanism. The nucleophile active site attacks the C1' of nucleotide 34 to detach the guanine base from the RNA, forming a covalent enzyme-RNA intermediate. The proton acceptor active site deprotonates the incoming queuine, allowing a nucleophilic attack on the C1' of the ribose to form the product. The polypeptide is Queuine tRNA-ribosyltransferase catalytic subunit 1 (Xenopus laevis (African clawed frog)).